The following is a 1305-amino-acid chain: Serine protease EspC (1305 aa).

The N-terminal stretch at 1 to 53 (MNKIYALKYCHATGGLIAVSELASRVMKKAARGSLLALFNLSLYGAFLSASQA) is a signal peptide. Residues 55–297 (QLNIDNVWAR…SILNQYDENT (243 aa)) enclose the Peptidase S6 domain. Residues H125, D153, and S256 each act as charge relay system in the active site. The Autotransporter domain occupies 1039–1305 (DTQGDAGVWA…AINANFRYSF (267 aa)).

In terms of processing, cleaved to release the mature protein from the outer membrane.

The protein resides in the periplasm. The protein localises to the secreted. It localises to the cell surface. Its subcellular location is the cell outer membrane. With respect to regulation, inhibition of cytotoxic activity by phenylmethylsulfonyl fluoride. Its function is as follows. Serine protease with enterotoxic and cytotoxic activities. Cleaves fodrin, but does not cause its redistribution within epithelial cells. The exact role of EspC in EPEC pathogenesis is still unknown. In Escherichia coli O127:H6 (strain E2348/69 / EPEC), this protein is Serine protease EspC (espC).